The chain runs to 80 residues: Exodeoxyribonuclease 7 small subunit (80 aa).

The protein belongs to the XseB family. Heterooligomer composed of large and small subunits.

It localises to the cytoplasm. It carries out the reaction Exonucleolytic cleavage in either 5'- to 3'- or 3'- to 5'-direction to yield nucleoside 5'-phosphates.. In terms of biological role, bidirectionally degrades single-stranded DNA into large acid-insoluble oligonucleotides, which are then degraded further into small acid-soluble oligonucleotides. In Pseudomonas paraeruginosa (strain DSM 24068 / PA7) (Pseudomonas aeruginosa (strain PA7)), this protein is Exodeoxyribonuclease 7 small subunit.